The primary structure comprises 170 residues: Aspartate 1-decarboxylase (170 aa).

The active-site Schiff-base intermediate with substrate; via pyruvic acid is the Ser25. At Ser25 the chain carries Pyruvic acid (Ser). Residue Thr57 coordinates substrate. Tyr58 functions as the Proton donor in the catalytic mechanism. Residue 73–75 (GAA) participates in substrate binding. The disordered stretch occupies residues 118-170 (GHDPAEALPDDPSSLRGDLAVPGNPVTAAARRGTPTHQAPVALPASRTVVAPR).

It belongs to the PanD family. Heterooctamer of four alpha and four beta subunits. The cofactor is pyruvate. In terms of processing, is synthesized initially as an inactive proenzyme, which is activated by self-cleavage at a specific serine bond to produce a beta-subunit with a hydroxyl group at its C-terminus and an alpha-subunit with a pyruvoyl group at its N-terminus.

It is found in the cytoplasm. It carries out the reaction L-aspartate + H(+) = beta-alanine + CO2. It participates in cofactor biosynthesis; (R)-pantothenate biosynthesis; beta-alanine from L-aspartate: step 1/1. Catalyzes the pyruvoyl-dependent decarboxylation of aspartate to produce beta-alanine. The chain is Aspartate 1-decarboxylase from Frankia alni (strain DSM 45986 / CECT 9034 / ACN14a).